A 104-amino-acid chain; its full sequence is N(4)-acetylcytidine amidohydrolase (104 aa).

An ASCH domain is found at 6-101; that stretch reads TFFERFEHDI…EQLYMIRFKV (96 aa). Residue lysine 20 is the Proton acceptor of the active site. Residue threonine 23 is the Nucleophile of the active site. Glutamate 73 serves as the catalytic Proton donor.

It belongs to the N(4)-acetylcytidine amidohydrolase family.

The enzyme catalyses N(4)-acetylcytidine + H2O = cytidine + acetate + H(+). It catalyses the reaction N(4)-acetyl-2'-deoxycytidine + H2O = 2'-deoxycytidine + acetate + H(+). The catalysed reaction is N(4)-acetylcytosine + H2O = cytosine + acetate + H(+). In terms of biological role, catalyzes the hydrolysis of N(4)-acetylcytidine (ac4C). This chain is N(4)-acetylcytidine amidohydrolase, found in Shewanella oneidensis (strain ATCC 700550 / JCM 31522 / CIP 106686 / LMG 19005 / NCIMB 14063 / MR-1).